Here is a 408-residue protein sequence, read N- to C-terminus: Histidine--tRNA ligase (408 aa).

It belongs to the class-II aminoacyl-tRNA synthetase family. Homodimer.

The protein localises to the cytoplasm. It carries out the reaction tRNA(His) + L-histidine + ATP = L-histidyl-tRNA(His) + AMP + diphosphate + H(+). This Campylobacter jejuni subsp. doylei (strain ATCC BAA-1458 / RM4099 / 269.97) protein is Histidine--tRNA ligase.